Reading from the N-terminus, the 1535-residue chain is Protein artichoke (1535 aa).

Residues 1-19 (MMLLPIFLLLCIGINLIRA) form the signal peptide. LRR repeat units lie at residues 64-87 (KGRI…FFGS), 89-110 (QIVR…WLNE), 112-135 (ENGL…SLNG), 136-157 (MINM…DFSG), 158-181 (LLSL…LFRH), 183-206 (PKLQ…LFDG), 207-230 (LISL…ALSR), 231-256 (LPNL…IVKD), 257-280 (LEHL…SFVD), 281-304 (LPNL…AFLR), 306-328 (PQLK…SLLQ), 331-356 (GSGV…LLDA), 357-380 (LPRL…ALRG), 382-404 (GTLE…ALMA), 406-429 (PALR…FWNL), 430-452 (PGLK…LLAG), 453-476 (LPSL…SFRH), 478-500 (PLLE…TLIH), 521-545 (LPRI…ASKD), 548-571 (LPNL…GFQG), 573-595 (MELR…SFIG), 597-619 (QRLE…ALLP), 620-643 (LAEL…FFSN), 645-667 (SRLE…AFDT), 669-691 (RSLE…LGNL), 692-714 (NNLR…VIGG), 716-738 (RNVV…TFRN), 739-762 (LPKL…ALKG), 764-786 (DELQ…VFEE), 788-810 (PSLL…SFHN), 811-834 (ANSL…GLRS), 835-858 (MRNL…PLKA), 860-882 (NWLV…PFET), and 883-906 (MPRL…TFRN). The region spanning 919 to 963 (NPIDCNCEMQWLSVWLQETNFPYPGPKCQDGRLLRSARMERSLCV) is the LRRCT domain. Disordered regions lie at residues 1036 to 1055 (HSAI…NSNI), 1253 to 1331 (TQAR…DSQY), 1377 to 1416 (VTTT…GRST), and 1429 to 1449 (AQPT…EGVA). Over residues 1253-1270 (TQARPKPTKSSGESSETA) the composition is skewed to polar residues. Low complexity-rich tracts occupy residues 1271 to 1285 (TYEV…TTTT) and 1293 to 1315 (TSTT…TQVT). Polar residues-rich tracts occupy residues 1316 to 1328 (PAEN…TELD) and 1377 to 1391 (VTTT…NQVT). A compositionally biased stretch (pro residues) spans 1398–1407 (TVPPPPPASP).

Its subcellular location is the secreted. It is found in the extracellular space. It localises to the extracellular matrix. The protein localises to the cytoplasm. Required for normal morphology and function of ciliated sensory organs. This chain is Protein artichoke, found in Drosophila melanogaster (Fruit fly).